Here is a 129-residue protein sequence, read N- to C-terminus: Small ribosomal subunit protein uS11c (129 aa).

This sequence belongs to the universal ribosomal protein uS11 family. In terms of assembly, part of the 30S ribosomal subunit.

It localises to the plastid. It is found in the chloroplast. This is Small ribosomal subunit protein uS11c from Pleurastrum terricola (Filamentous green alga).